Consider the following 173-residue polypeptide: Bifunctional protein PyrR (173 aa).

The PRPP-binding motif lies at 93–105 (VILIDDVLYTGRT).

It belongs to the purine/pyrimidine phosphoribosyltransferase family. PyrR subfamily. Homodimer and homohexamer; in equilibrium.

The enzyme catalyses UMP + diphosphate = 5-phospho-alpha-D-ribose 1-diphosphate + uracil. Functionally, regulates transcriptional attenuation of the pyrimidine nucleotide (pyr) operon by binding in a uridine-dependent manner to specific sites on pyr mRNA. This disrupts an antiterminator hairpin in the RNA and favors formation of a downstream transcription terminator, leading to a reduced expression of downstream genes. Also displays a weak uracil phosphoribosyltransferase activity which is not physiologically significant. The polypeptide is Bifunctional protein PyrR (Streptococcus pyogenes serotype M12 (strain MGAS2096)).